The primary structure comprises 208 residues: MKELKDHVVVITYGPSSEASVTASPVSQQTPSLFAYSVTPSASRFSSRRASVHVIGLVLRFITMVLCFVSALSLAVNVQRPSKRHLTQNSSSFASYPELLYCFGVAVIGFVYTSLQTFKGVCDITHRGVLISEPLSDYISFIFDQVICYLLVSSSSVAIAWIQHINEDAIKTLRNNSIVSVSMSFSAFLVLTLSGLLSGYKLCKRFMW.

Over 1 to 53 (MKELKDHVVVITYGPSSEASVTASPVSQQTPSLFAYSVTPSASRFSSRRASVH) the chain is Cytoplasmic. Residues 54–74 (VIGLVLRFITMVLCFVSALSL) form a helical membrane-spanning segment. Residues 75-92 (AVNVQRPSKRHLTQNSSS) are Extracellular-facing. Residue asparagine 89 is glycosylated (N-linked (GlcNAc...) asparagine). The chain crosses the membrane as a helical span at residues 93-113 (FASYPELLYCFGVAVIGFVYT). The Cytoplasmic segment spans residues 114–141 (SLQTFKGVCDITHRGVLISEPLSDYISF). A helical transmembrane segment spans residues 142 to 162 (IFDQVICYLLVSSSSVAIAWI). Residues 163-176 (QHINEDAIKTLRNN) are Extracellular-facing. N-linked (GlcNAc...) asparagine glycosylation is present at asparagine 175. The chain crosses the membrane as a helical span at residues 177–197 (SIVSVSMSFSAFLVLTLSGLL). The Cytoplasmic segment spans residues 198–208 (SGYKLCKRFMW).

This sequence belongs to the Casparian strip membrane proteins (CASP) family. In terms of assembly, homodimer and heterodimers.

It localises to the cell membrane. The polypeptide is CASP-like protein 4A4 (Arabidopsis thaliana (Mouse-ear cress)).